An 855-amino-acid polypeptide reads, in one-letter code: DNA polymerase (855 aa).

In terms of domain architecture, 3'-5' exonuclease spans 107–332 (KPEMKPVFDA…LHNFFLPKIE (226 aa)). Residues 333–833 (KNEKLCSLYY…MDKEHPDHSK (501 aa)) are polymerase.

The protein belongs to the DNA polymerase type-A family. Single-chain monomer with multiple functions.

It catalyses the reaction DNA(n) + a 2'-deoxyribonucleoside 5'-triphosphate = DNA(n+1) + diphosphate. Replicates the viral genomic DNA. This polymerase possesses two enzymatic activities: DNA synthesis (polymerase) and an exonucleolytic activity that degrades single-stranded DNA in the 3'-5' direction for proofreading purpose. The DNA synthesis very likely occurs by strand displacement. This chain is DNA polymerase, found in Escherichia phage T5 (Enterobacteria phage T5).